The sequence spans 306 residues: uncharacterized protein (306 aa).

Positions 13-39 (NMLNEIAANNNLLNNKNNQTNQLNNNQ) form a coiled coil. Disordered stretches follow at residues 44 to 76 (YNNQ…HQQN), 103 to 204 (DSKE…QSGQ), and 216 to 249 (QKQL…TMQH). Positions 119 to 201 (HQQPIQNNPS…QFAQPNQYNQ (83 aa)) are enriched in low complexity. The span at 218-235 (QLDKNQPEKIPSKPEKNQ) shows a compositional bias: basic and acidic residues. Residues 279–299 (LFDYIIIPIALVLVFLFLVHP) traverse the membrane as a helical segment.

The protein localises to the membrane. This is an uncharacterized protein from Acanthamoeba polyphaga mimivirus (APMV).